The following is a 196-amino-acid chain: MSCEEIAVCAVRLRENLCLYFEELECDAFCKDKTIKRFFRNVNSQLLVVRPDLNVAAFEDVTDQEVKSGSGMYFDIHCYKTTAPSARMPVAFSVQVEDKSYYMCCEKEHGKMVVRFREGEVPKDIPGESNIIFFKKTFTSCSSKAFKFEYSLEQGMFLAFEEEDSLRKLILKKLPREDEVDETTKFVTSHNERHNL.

Residues 1–29 (MSCEEIAVCAVRLRENLCLYFEELECDAF) constitute a propeptide that is removed on maturation.

The protein belongs to the IL-1 family. In terms of assembly, forms a ternary complex with ligand-binding receptor subunit IL18R1 and signaling receptor subunit IL18RAP at the plasma membrane. Mature IL18 first binds to IL18R1 forming a low affinity binary complex, which then interacts with IL18RAP to form a high affinity ternary complex that signals inside the cell. Interacts with cargo receptor TMED10; the interaction mediates the translocation from the cytoplasm into the ERGIC (endoplasmic reticulum-Golgi intermediate compartment) and thereby secretion. In terms of processing, the pro-IL-18 precursor is processed by CASP1 or CASP4 to yield the active form.

It is found in the cytoplasm. It localises to the secreted. Augments natural killer cell activity in spleen cells and stimulates interferon gamma production in T-helper type I cells. Involved in transduction of inflammation downstream of pyroptosis: its mature form is specifically released in the extracellular milieu by passing through the gasdermin-D (GSDMD) pore. The protein is Interleukin-18 (IL18) of Gallus gallus (Chicken).